Here is a 426-residue protein sequence, read N- to C-terminus: Adenylosuccinate synthetase (426 aa).

GTP contacts are provided by residues 12 to 18 (GDEGKGK) and 40 to 42 (GHT). Catalysis depends on aspartate 13, which acts as the Proton acceptor. Positions 13 and 40 each coordinate Mg(2+). Residues 13-16 (DEGK), 38-41 (NAGH), threonine 130, arginine 144, glutamine 224, threonine 239, and arginine 303 contribute to the IMP site. Residue histidine 41 is the Proton donor of the active site. Substrate is bound at residue 299-305 (TVTNRVR). Residues arginine 305, 331–333 (KLD), and 413–415 (STG) each bind GTP.

The protein belongs to the adenylosuccinate synthetase family. As to quaternary structure, homodimer. Mg(2+) serves as cofactor.

It is found in the cytoplasm. It catalyses the reaction IMP + L-aspartate + GTP = N(6)-(1,2-dicarboxyethyl)-AMP + GDP + phosphate + 2 H(+). The protein operates within purine metabolism; AMP biosynthesis via de novo pathway; AMP from IMP: step 1/2. Plays an important role in the de novo pathway of purine nucleotide biosynthesis. Catalyzes the first committed step in the biosynthesis of AMP from IMP. In Anaplasma marginale (strain St. Maries), this protein is Adenylosuccinate synthetase.